The following is a 358-amino-acid chain: D-alanine--D-alanine ligase (358 aa).

One can recognise an ATP-grasp domain in the interval Lys-136–Gln-341. Glu-169 to Glu-224 lines the ATP pocket. Mg(2+) contacts are provided by Asp-295, Glu-308, and Asn-310.

It belongs to the D-alanine--D-alanine ligase family. It depends on Mg(2+) as a cofactor. The cofactor is Mn(2+).

It localises to the cytoplasm. The catalysed reaction is 2 D-alanine + ATP = D-alanyl-D-alanine + ADP + phosphate + H(+). The protein operates within cell wall biogenesis; peptidoglycan biosynthesis. Its function is as follows. Cell wall formation. This Enterococcus hirae (strain ATCC 9790 / DSM 20160 / JCM 8729 / LMG 6399 / NBRC 3181 / NCIMB 6459 / NCDO 1258 / NCTC 12367 / WDCM 00089 / R) protein is D-alanine--D-alanine ligase.